Consider the following 641-residue polypeptide: Chaperone protein DnaK 2 (641 aa).

Thr-199 bears the Phosphothreonine; by autocatalysis mark. The segment covering Met-601–Gln-616 has biased composition (low complexity). The disordered stretch occupies residues Met-601–Lys-641. Residues Thr-626 to Phe-635 are compositionally biased toward acidic residues.

The protein belongs to the heat shock protein 70 family.

In terms of biological role, acts as a chaperone. In Photobacterium profundum (strain SS9), this protein is Chaperone protein DnaK 2.